The primary structure comprises 429 residues: Gamma-glutamyl phosphate reductase (429 aa).

The protein belongs to the gamma-glutamyl phosphate reductase family.

It localises to the cytoplasm. It catalyses the reaction L-glutamate 5-semialdehyde + phosphate + NADP(+) = L-glutamyl 5-phosphate + NADPH + H(+). Its pathway is amino-acid biosynthesis; L-proline biosynthesis; L-glutamate 5-semialdehyde from L-glutamate: step 2/2. Functionally, catalyzes the NADPH-dependent reduction of L-glutamate 5-phosphate into L-glutamate 5-semialdehyde and phosphate. The product spontaneously undergoes cyclization to form 1-pyrroline-5-carboxylate. The protein is Gamma-glutamyl phosphate reductase of Methylibium petroleiphilum (strain ATCC BAA-1232 / LMG 22953 / PM1).